The following is a 249-amino-acid chain: 3-deoxy-manno-octulosonate cytidylyltransferase (249 aa).

The protein belongs to the KdsB family.

The protein resides in the cytoplasm. It catalyses the reaction 3-deoxy-alpha-D-manno-oct-2-ulosonate + CTP = CMP-3-deoxy-beta-D-manno-octulosonate + diphosphate. Its pathway is nucleotide-sugar biosynthesis; CMP-3-deoxy-D-manno-octulosonate biosynthesis; CMP-3-deoxy-D-manno-octulosonate from 3-deoxy-D-manno-octulosonate and CTP: step 1/1. The protein operates within bacterial outer membrane biogenesis; lipopolysaccharide biosynthesis. In terms of biological role, activates KDO (a required 8-carbon sugar) for incorporation into bacterial lipopolysaccharide in Gram-negative bacteria. The chain is 3-deoxy-manno-octulosonate cytidylyltransferase from Coxiella burnetii (strain CbuG_Q212) (Coxiella burnetii (strain Q212)).